Reading from the N-terminus, the 103-residue chain is ATP-dependent Clp protease adapter protein ClpS 2 (103 aa).

It belongs to the ClpS family. In terms of assembly, binds to the N-terminal domain of the chaperone ClpA.

Its function is as follows. Involved in the modulation of the specificity of the ClpAP-mediated ATP-dependent protein degradation. The protein is ATP-dependent Clp protease adapter protein ClpS 2 of Agrobacterium fabrum (strain C58 / ATCC 33970) (Agrobacterium tumefaciens (strain C58)).